The primary structure comprises 90 residues: E22 protein (90 aa).

This chain is E22 protein (43), found in Bacillus subtilis (Bacteriophage SP01).